We begin with the raw amino-acid sequence, 1205 residues long: Bromodomain and PHD finger-containing protein 3 (1205 aa).

2 disordered regions span residues 1-27 (MRKP…KCSP) and 75-121 (NSNK…SFRM). A Phosphoserine modification is found at Ser-17. Residues 75–84 (NSNKENSEQP) show a composition bias toward polar residues. The span at 89-99 (KSKKPSSKGKK) shows a compositional bias: basic residues. The PHD-type 1 zinc-finger motif lies at 212 to 262 (DAFCCVCLDDECHNSNVILFCDICNLAVHQECYGVPYIPEGQWLCRCCLQS). The segment at 266–299 (PVDCILCPNKGGAFKQTSDGHWAHVVCAIWIPEV) adopts a C2HC pre-PHD-type zinc-finger fold. Residues 323–387 (LTCYICKQKG…RKTAYCEAHS (65 aa)) form a PHD-type 2 zinc finger. Residues 387 to 472 (SPPGAATARR…AGQDTPSTLP (86 aa)) form a disordered region. Phosphoserine is present on residues Ser-400 and Ser-403. Over residues 417–432 (DGEEEEEEEVEEEEQE) the composition is skewed to acidic residues. Basic residues predominate over residues 444-456 (VPKKSKMSLKQKI). An N6-acetyllysine mark is found at Lys-447, Lys-449, and Lys-671. The 105-residue stretch at 589 to 693 (LELMPFNVLL…DLGGAILRHA (105 aa)) folds into the Bromo domain. Residues Ser-713 and Ser-740 each carry the phosphoserine modification. The disordered stretch occupies residues 779-897 (RQKLAQPPPP…LQLGNEPLQR (119 aa)). Acidic residues predominate over residues 817-827 (LQEEPEDDGDR). Over residues 839-851 (EPTGPAPSLSEQE) the composition is skewed to low complexity. The residue at position 900 (Ser-900) is a Phosphoserine. Disordered regions lie at residues 907–926 (LSLM…VGRR) and 931–1015 (FKKA…SECS). Residues 942–955 (RSPDRVLENGEDHG) are compositionally biased toward basic and acidic residues. Phosphoserine occurs at positions 962 and 965. A compositionally biased stretch (basic and acidic residues) spans 980–991 (SCSESEGERSPQ). A PWWP domain is found at 1076-1159 (PLELVWAKCR…RDKVLPLGVE (84 aa)).

Component of some HBO1 complex composed of KAT7/HBO1, MEAF6, ING4 or ING5, and BRPF3. Component of the MOZ/MORF complex composed at least of ING5, KAT6A, KAT6B, MEAF6 and one of BRPF1, BRD1/BRPF2 and BRPF3. Interacts with KAT7/HBO1; the interaction is direct.

The protein localises to the nucleus. Its function is as follows. Scaffold subunit of various histone acetyltransferase (HAT) complexes, such as the MOZ/MORF and HBO1 complexes, which have a histone H3 acetyltransferase activity. Plays a role in DNA replication initiation by directing KAT7/HBO1 specificity towards histone H3 'Lys-14' acetylation (H3K14ac), thereby facilitating the activation of replication origins. Component of the MOZ/MORF complex which has a histone H3 acetyltransferase activity. This chain is Bromodomain and PHD finger-containing protein 3, found in Homo sapiens (Human).